A 368-amino-acid polypeptide reads, in one-letter code: Phosphoserine aminotransferase (368 aa).

Arginine 42 serves as a coordination point for L-glutamate. Residues 76–77 (AS), tryptophan 102, threonine 152, aspartate 179, and glutamine 202 contribute to the pyridoxal 5'-phosphate site. At lysine 203 the chain carries N6-(pyridoxal phosphate)lysine. 245-246 (NT) is a binding site for pyridoxal 5'-phosphate.

It belongs to the class-V pyridoxal-phosphate-dependent aminotransferase family. SerC subfamily. As to quaternary structure, homodimer. It depends on pyridoxal 5'-phosphate as a cofactor.

The protein resides in the cytoplasm. The enzyme catalyses O-phospho-L-serine + 2-oxoglutarate = 3-phosphooxypyruvate + L-glutamate. It catalyses the reaction 4-(phosphooxy)-L-threonine + 2-oxoglutarate = (R)-3-hydroxy-2-oxo-4-phosphooxybutanoate + L-glutamate. The protein operates within amino-acid biosynthesis; L-serine biosynthesis; L-serine from 3-phospho-D-glycerate: step 2/3. Its pathway is cofactor biosynthesis; pyridoxine 5'-phosphate biosynthesis; pyridoxine 5'-phosphate from D-erythrose 4-phosphate: step 3/5. In terms of biological role, catalyzes the reversible conversion of 3-phosphohydroxypyruvate to phosphoserine and of 3-hydroxy-2-oxo-4-phosphonooxybutanoate to phosphohydroxythreonine. The sequence is that of Phosphoserine aminotransferase from Nitrosomonas europaea (strain ATCC 19718 / CIP 103999 / KCTC 2705 / NBRC 14298).